The chain runs to 81 residues: Protein L83L (81 aa).

Residues 1–28 (MDTSLKNNDGALDADNKNYQDYKDEPDK) are disordered. Positions 14–28 (ADNKNYQDYKDEPDK) are enriched in basic and acidic residues.

It belongs to the asfivirus L83L family. Interacts with host IL1B.

The protein resides in the host cytoplasm. Its function is as follows. May subvert the host innate immune response by interacting with host IL1B and interfering with its function. The sequence is that of Protein L83L from African swine fever virus (isolate Tick/South Africa/Pretoriuskop Pr4/1996) (ASFV).